Consider the following 587-residue polypeptide: Transport inhibitor response 1-like protein Os05g0150500 (587 aa).

The F-box domain occupies 6–63 (SRAACAAAAPPWHSLPDEVWEHAFSFLPAAADRGAAAGACSSWLRAERRSRRRLAVAN). K85 provides a ligand contact to 1D-myo-inositol hexakisphosphate. Residues 92-93 (DF) are interaction with auxin-responsive proteins. 1D-myo-inositol hexakisphosphate contacts are provided by residues 124 to 125 (KR) and R355. The interval 358 to 363 (PSDPFG) is interaction with auxin-responsive proteins. 409-411 (CFR) is a binding site for 1D-myo-inositol hexakisphosphate. The interaction with auxin-responsive proteins stretch occupies residues 413–417 (CILEP). Residue R444 coordinates 1D-myo-inositol hexakisphosphate. Residues 472 to 473 (AF) are interaction with auxin-responsive proteins. 1D-myo-inositol hexakisphosphate is bound by residues 492–493 (KK) and R517.

Part of a SCF (SKP1-cullin-F-box) protein ligase complex. May interact with auxin and auxin-responsive proteins.

It is found in the nucleus. The protein operates within protein modification; protein ubiquitination. This is Transport inhibitor response 1-like protein Os05g0150500 from Oryza sativa subsp. japonica (Rice).